Consider the following 228-residue polypeptide: Protein Iojap, chloroplastic (228 aa).

Residues 1–54 (MGGTSAAVPSHGLACAPPAAVTLNPRARRRRASSGSGGHRSSPQQPLRSDLLPP) are disordered. A chloroplast-targeting transit peptide spans 1-62 (MGGTSAAVPS…PPATVACRAR (62 aa)).

This sequence belongs to the Iojap/RsfS family. In terms of assembly, interacts with chloroplast ribosomal protein uL14c (rpl14).

Its subcellular location is the plastid. It localises to the chloroplast. Its function is as follows. May be a ribosome silencing factor (Potential). Involved in plastid biogenesis. Plastids affected by a mutation in Iojap lose the ability to perform translation and lack plastid ribosomes. The sequence is that of Protein Iojap, chloroplastic (Ij) from Zea mays (Maize).